We begin with the raw amino-acid sequence, 200 residues long: Large ribosomal subunit protein uL4 (200 aa).

The interval R43–D71 is disordered.

It belongs to the universal ribosomal protein uL4 family. As to quaternary structure, part of the 50S ribosomal subunit.

One of the primary rRNA binding proteins, this protein initially binds near the 5'-end of the 23S rRNA. It is important during the early stages of 50S assembly. It makes multiple contacts with different domains of the 23S rRNA in the assembled 50S subunit and ribosome. Functionally, forms part of the polypeptide exit tunnel. The chain is Large ribosomal subunit protein uL4 from Histophilus somni (strain 2336) (Haemophilus somnus).